We begin with the raw amino-acid sequence, 74 residues long: uncharacterized protein (74 aa).

Residues 55–74 (DENSESESKDGASWFKVYRG) form a disordered region.

This is an uncharacterized protein from Listeria innocua serovar 6a (strain ATCC BAA-680 / CLIP 11262).